Consider the following 452-residue polypeptide: Phosphoglucosamine mutase (452 aa).

S98 serves as the catalytic Phosphoserine intermediate. The Mg(2+) site is built by S98, D239, D241, and D243. Residue S98 is modified to Phosphoserine.

Belongs to the phosphohexose mutase family. The cofactor is Mg(2+). In terms of processing, activated by phosphorylation.

The catalysed reaction is alpha-D-glucosamine 1-phosphate = D-glucosamine 6-phosphate. Its function is as follows. Catalyzes the conversion of glucosamine-6-phosphate to glucosamine-1-phosphate. The chain is Phosphoglucosamine mutase from Anaplasma marginale (strain Florida).